The following is a 36-amino-acid chain: MTNLNLPSIFVPLVGLVFPAIAMASLFLHVQKNKIV.

A helical transmembrane segment spans residues 8-28; that stretch reads SIFVPLVGLVFPAIAMASLFL.

This sequence belongs to the PsaI family.

Its subcellular location is the plastid. It is found in the chloroplast thylakoid membrane. In terms of biological role, may help in the organization of the PsaL subunit. The polypeptide is Photosystem I reaction center subunit VIII (Solanum bulbocastanum (Wild potato)).